Here is a 676-residue protein sequence, read N- to C-terminus: tRNA uridine 5-carboxymethylaminomethyl modification enzyme MnmG (676 aa).

An FAD-binding site is contributed by 15–20; the sequence is GAGHAG. 316–330 contributes to the NAD(+) binding site; sequence GPRYCPSIEDKIVRF.

The protein belongs to the MnmG family. In terms of assembly, homodimer. Heterotetramer of two MnmE and two MnmG subunits. FAD serves as cofactor.

It is found in the cytoplasm. NAD-binding protein involved in the addition of a carboxymethylaminomethyl (cmnm) group at the wobble position (U34) of certain tRNAs, forming tRNA-cmnm(5)s(2)U34. This chain is tRNA uridine 5-carboxymethylaminomethyl modification enzyme MnmG, found in Roseiflexus castenholzii (strain DSM 13941 / HLO8).